We begin with the raw amino-acid sequence, 254 residues long: Leucyl/phenylalanyl-tRNA--protein transferase (254 aa).

The protein belongs to the L/F-transferase family.

Its subcellular location is the cytoplasm. It catalyses the reaction N-terminal L-lysyl-[protein] + L-leucyl-tRNA(Leu) = N-terminal L-leucyl-L-lysyl-[protein] + tRNA(Leu) + H(+). The catalysed reaction is N-terminal L-arginyl-[protein] + L-leucyl-tRNA(Leu) = N-terminal L-leucyl-L-arginyl-[protein] + tRNA(Leu) + H(+). The enzyme catalyses L-phenylalanyl-tRNA(Phe) + an N-terminal L-alpha-aminoacyl-[protein] = an N-terminal L-phenylalanyl-L-alpha-aminoacyl-[protein] + tRNA(Phe). In terms of biological role, functions in the N-end rule pathway of protein degradation where it conjugates Leu, Phe and, less efficiently, Met from aminoacyl-tRNAs to the N-termini of proteins containing an N-terminal arginine or lysine. The chain is Leucyl/phenylalanyl-tRNA--protein transferase from Bordetella bronchiseptica (strain ATCC BAA-588 / NCTC 13252 / RB50) (Alcaligenes bronchisepticus).